The primary structure comprises 278 residues: Secoisolariciresinol dehydrogenase (278 aa).

NAD(+)-binding positions include 23–28, D47, V73, and N99; that span reads GGAGGI. Substrate-binding residues include S104 and S164. The active-site Proton donor/acceptor is the Y167. Positions 171 and 200 each coordinate NAD(+).

The protein belongs to the short-chain dehydrogenases/reductases (SDR) family. Homotetramer. Mostly expressed in stems and rhizomes, and, to a lower extent, in leaves.

It catalyses the reaction (-)-secoisolariciresinol + 2 NAD(+) = (-)-matairesinol + 2 NADH + 2 H(+). The protein operates within aromatic compound metabolism; phenylpropanoid biosynthesis. Oxidoreductase involved in lignan biosynthesis. Also involved in the biosynthesis of etoposide, a chemotherapeutic compound of the topoisomerase inhibitor family. Catalyzes the stereospecific conversion of (-)-secoisolariciresinol to (-)-matairesinol via a lactol intermediate. In Sinopodophyllum hexandrum (Himalayan may apple), this protein is Secoisolariciresinol dehydrogenase.